The primary structure comprises 154 residues: Lymphocyte antigen 6K (154 aa).

The N-terminal stretch at 1–20 is a signal peptide; sequence MAFLVALLVVLGLQLVQSNA. Residues 21 to 117 form the UPAR/Ly6 domain; that stretch reads LTCHVCEAQN…NGEGPPTDQL (97 aa). Residue G123 is the site of GPI-anchor amidated glycine attachment. Positions 124-154 are cleaved as a propeptide — removed in mature form; sequence KASGRRHRYIELLLTGFMVLTANGLSALCLL.

In terms of assembly, interacts with ADAM3 and TEX101. Strongly expressed in testes and weakly expressed in the epididymis, ovary, and uterus. Expressed in testicular germ cells (TGCs). Expressed in the testicular seminiferous tubules, in spermatocytes, spermatids, and testicular spermatozoa.

It is found in the secreted. It localises to the cytoplasm. The protein localises to the cell membrane. The protein resides in the cytoplasmic vesicle. Its subcellular location is the secretory vesicle. It is found in the acrosome. It localises to the membrane raft. Required for sperm migration into the oviduct and male fertility by controlling binding of sperm to zona pellucida. May play a role in cell growth. In Mus musculus (Mouse), this protein is Lymphocyte antigen 6K.